The following is a 789-amino-acid chain: E3 UFM1-protein ligase 1 (789 aa).

The required for E3 UFM1-protein ligase activity stretch occupies residues 2–212; it reads AADWEEIRRL…VSNLITRYGF (211 aa). Disordered stretches follow at residues 407–470 and 743–763; these read LENS…TGRN and SKKAEQEDDNKTEEEEGADTI. Residues 444–453 are compositionally biased toward basic residues; that stretch reads KIKKTKKKGR. Positions 748-760 are enriched in acidic residues; that stretch reads QEDDNKTEEEEGA.

The protein belongs to the UFL1 family. Catalytic component of the UFM1 ribosome E3 ligase (UREL) complex. Interacts with E2-like enzyme UFC1.

The protein localises to the endoplasmic reticulum membrane. It is found in the cytoplasm. The protein resides in the cytosol. Its subcellular location is the nucleus. It localises to the chromosome. E3 protein ligase that mediates ufmylation, the covalent attachment of the ubiquitin-like modifier UFM1 to lysine residues on target proteins, and which plays a key role in various processes, such as ribosome recycling, response to DNA damage, interferon response or reticulophagy (also called ER-phagy). As part of the UREL complex, plays a key role in ribosome recycling by catalyzing mono-ufmylation of RPL26/uL24 subunit of the 60S ribosome. Ufmylation of RPL26/uL24 occurs on free 60S ribosomes following ribosome dissociation: it weakens the junction between post-termination 60S subunits and SEC61 translocons, promoting release and recycling of the large ribosomal subunit from the endoplasmic reticulum membrane. Ufmylation of RPL26/uL24 and subsequent 60S ribosome recycling either take place after normal termination of translation or after ribosome stalling during cotranslational translocation at the endoplasmic reticulum. Involved in reticulophagy in response to endoplasmic reticulum stress by mediating ufmylation of proteins such as CYB5R3 and RPN1, thereby promoting lysosomal degradation of ufmylated proteins. Ufmylation in response to endoplasmic reticulum stress is essential for processes such as hematopoiesis, blood vessel morphogenesis or inflammatory response. The protein is E3 UFM1-protein ligase 1 of Gallus gallus (Chicken).